We begin with the raw amino-acid sequence, 524 residues long: Probable 1,3-beta-glucanosyltransferase GAS3 (524 aa).

The signal sequence occupies residues Met1–Ala21. A disulfide bridge connects residues Cys78 and Cys107. (1,3-beta-D-glucosyl)n is bound by residues Tyr96, Asn168, and Glu169. The active-site Proton donor is Glu169. Asn201 is a glycosylation site (N-linked (GlcNAc...) asparagine). 2 residues coordinate (1,3-beta-D-glucosyl)n: Asp212 and Arg217. 2 cysteine pairs are disulfide-bonded: Cys226–Cys369 and Cys254–Cys286. N-linked (GlcNAc...) asparagine glycosylation is present at Asn269. Catalysis depends on Glu283, which acts as the Nucleophile. Tyr315 contacts (1,3-beta-D-glucosyl)n. 4 N-linked (GlcNAc...) asparagine glycosylation sites follow: Asn350, Asn385, Asn404, and Asn422. A disordered region spans residues Thr461–Gly498. The GPI-anchor amidated glycine moiety is linked to residue Gly498. Positions Val499–Leu524 are cleaved as a propeptide — removed in mature form.

Belongs to the glycosyl hydrolase 72 family. Post-translationally, the GPI-anchor is attached to the protein in the endoplasmic reticulum and serves to target the protein to the cell surface. There, the glucosamine-inositol phospholipid moiety is cleaved off and the GPI-modified mannoprotein is covalently attached via its lipidless GPI glycan remnant to the 1,6-beta-glucan of the outer cell wall layer. In terms of processing, N-glycosylated.

It localises to the secreted. The protein resides in the cell wall. It is found in the membrane. Its function is as follows. Splits internally a 1,3-beta-glucan molecule and transfers the newly generated reducing end (the donor) to the non-reducing end of another 1,3-beta-glucan molecule (the acceptor) forming a 1,3-beta linkage, resulting in the elongation of 1,3-beta-glucan chains in the cell wall. Involved in cell wall biosynthesis and morphogenesis. This chain is Probable 1,3-beta-glucanosyltransferase GAS3 (GAS3), found in Saccharomyces cerevisiae (strain ATCC 204508 / S288c) (Baker's yeast).